A 122-amino-acid chain; its full sequence is MIQTQSMLDVADNSGARRVMCIKVLGGSHRRYAGIGDIIKVTVKEAIPRGKVKKGQVMTAVVVRTKHGVRRTDGSIIRFDGNAAVLLNSKQEPIGTRIFGPVTRELRTEKFMKIVSLAPEVL.

Belongs to the universal ribosomal protein uL14 family. In terms of assembly, part of the 50S ribosomal subunit. Forms a cluster with proteins L3 and L19. In the 70S ribosome, L14 and L19 interact and together make contacts with the 16S rRNA in bridges B5 and B8.

In terms of biological role, binds to 23S rRNA. Forms part of two intersubunit bridges in the 70S ribosome. The protein is Large ribosomal subunit protein uL14 of Pseudomonas paraeruginosa (strain DSM 24068 / PA7) (Pseudomonas aeruginosa (strain PA7)).